The sequence spans 66 residues: uncharacterized protein (66 aa).

A run of 2 helical transmembrane segments spans residues Ala-4 to Phe-24 and Leu-38 to Leu-58.

Its subcellular location is the membrane. This is an uncharacterized protein from Saccharomyces cerevisiae (strain ATCC 204508 / S288c) (Baker's yeast).